Consider the following 213-residue polypeptide: Orotidine 5'-phosphate decarboxylase (213 aa).

Substrate contacts are provided by residues Asp-11, Lys-33, 61–70 (DLKLADIPNT), Ser-113, 166–176 (PGVGAQGGKAS), Gly-189, and Arg-190. Lys-63 serves as the catalytic Proton donor.

The protein belongs to the OMP decarboxylase family. Type 1 subfamily. As to quaternary structure, homodimer.

It catalyses the reaction orotidine 5'-phosphate + H(+) = UMP + CO2. It participates in pyrimidine metabolism; UMP biosynthesis via de novo pathway; UMP from orotate: step 2/2. Catalyzes the decarboxylation of orotidine 5'-monophosphate (OMP) to uridine 5'-monophosphate (UMP). This chain is Orotidine 5'-phosphate decarboxylase, found in Thermococcus kodakarensis (strain ATCC BAA-918 / JCM 12380 / KOD1) (Pyrococcus kodakaraensis (strain KOD1)).